Here is a 610-residue protein sequence, read N- to C-terminus: Probable indole-3-acetic acid-amido synthetase GH3.1 (610 aa).

The protein belongs to the IAA-amido conjugating enzyme family. In terms of tissue distribution, expressed in flowers.

May catalyze the synthesis of indole-3-acetic acid (IAA)-amino acid conjugates, providing a mechanism for the plant to cope with the presence of excess auxin. The sequence is that of Probable indole-3-acetic acid-amido synthetase GH3.1 (GH3.1) from Oryza sativa subsp. japonica (Rice).